Consider the following 567-residue polypeptide: MRIEDLIAAARGELEADLLLEGGKLVNVFSGEIHRADISIYGGFVAGFDCPSARRVISVEDHLIAPGSIDAHVHIESSMLMPSEYARAVVPRGTLTVIADPHEIANVLGVDGISYLLRCAEGIPMRFLVTAPSCVPATHLETSGAALGVSEIASLLDDHRVVGLGEMMNYPGVIHRDKPVLAKLKVAASKNKTICGHAPGLGGRDLHAYAAALIEDDHECTRAEEAMEQLRAGICIMIREGSAARNLDELVKIIREYNTPNIMLCTDDLDPRDIVHRHIDHMIRRIIEAGTDPVAAIQMATINPARHFGLRRTGAVAPGYRADIIVMDHDFNVRRVIFEGEEVARDGRLTASFESKRLPVQTSMNVRLPITRESFRIPATGRIVRVIGVAPNQILTETIAARPEVRNGEVISDTRNDILKVAVVERHRATGNVGLGLVSGFGLKRGAIASSVSHDSHNIIVVGEDEESMVRAVESLISMGGGWVSVDGTTIASLPLPIAGLLSERRVEDVVEEAENVIAASHSLGSELEDSFMTLSFLALPVIPELRITDRGLVDVREFGHVPLFME.

This sequence belongs to the metallo-dependent hydrolases superfamily. Adenine deaminase family. The cofactor is Mn(2+).

It catalyses the reaction adenine + H2O + H(+) = hypoxanthine + NH4(+). In Methanothrix thermoacetophila (strain DSM 6194 / JCM 14653 / NBRC 101360 / PT) (Methanosaeta thermophila), this protein is Adenine deaminase.